The primary structure comprises 348 residues: Haptoglobin-related protein (348 aa).

The segment at residues 1–18 (MSDLGAVISLLLWGRQLF) is a signal peptide (not cleaved). The region spanning 34–87 (FPKPPEIANGYVEHLFRYQCKNYYRLRTEGDGVYTLNDKKQWINKAVGDKLPEC) is the Sushi domain. Positions 104–346 (ILGGHLDAKG…IQHWVQKTIA (243 aa)) constitute a Peptidase S1 domain. Disulfide bonds link C251–C282 and C293–C323.

Belongs to the peptidase S1 family. In terms of tissue distribution, in adult liver the amount of HPR mRNA is at the lower limit of detection, therefore the extent of its expression is at most less than 1000-fold that of the HP1F gene. No HPR mRNA can be detected in fetal liver. Expressed in Hep-G2 and leukemia MOLT-4 cell lines.

It localises to the secreted. Functionally, primate-specific plasma protein associated with apolipoprotein L-I (apoL-I)-containing high-density lipoprotein (HDL). This HDL particle, termed trypanosome lytic factor-1 (TLF-1), mediates human innate immune protection against many species of African trypanosomes. Binds hemoglobin with high affinity and may contribute to the clearance of cell-free hemoglobin to allow hepatic recycling of heme iron. The protein is Haptoglobin-related protein (HPR) of Homo sapiens (Human).